The sequence spans 368 residues: UDP-galactose/UDP-N-acetylglucosamine transporter srf-3 (368 aa).

The next 8 helical transmembrane spans lie at 72–92 (FVST…CLFL), 118–138 (LKVC…YVAA), 145–165 (TFMI…VIIL), 174–194 (WFAL…GTKA), 203–223 (FVGF…GIYF), 235–254 (LWMR…FSAI), 273–293 (SIVW…AVCI), and 317–337 (IFLF…LVIF).

The protein belongs to the nucleotide-sugar transporter family. SLC35A subfamily. As to expression, expressed exclusively in pharyngeal cells g1 and g2, lateral seam cells, spermatheca and vas deferens.

It is found in the golgi apparatus membrane. Its function is as follows. Acts as a transporter of both UDP-galactose and UDP-N-acetylglucosamine into the Golgi lumen. Apparently transports UDP-galactose and UDP-N-acetylglucosamine simultaneously, and independently, by an unknown mechanism. Functions redundantly with nucleotide sugar transporter nstp-4. May be involved in gonadal development. In Caenorhabditis elegans, this protein is UDP-galactose/UDP-N-acetylglucosamine transporter srf-3 (srf-3).